We begin with the raw amino-acid sequence, 276 residues long: MGIIDVQRSHLTATPSKERDAPAHPPPTILPVCILFPYTSIALPVLMYYIPEKGQFDQNPFLKLIAILPPCLYSAVRFPLLFLGNPESSCTPRPALYATLYLLLDASLLAFSAISILSIAAFTTTEWNSDEVVAVCSTLLPSLLVLPAHLLSTSCALTPGSIGFTDSSVDILIDLLMVSLLAAGLTLNVDESWRFFPYICISSLVLVLAKLLRKSSSMPRRDPAPAPAWRIAAFVLIFGLSMFVYFSILYECLLIFGNHFPWFPSQAPSNDLTNKW.

The segment at 1 to 24 (MGIIDVQRSHLTATPSKERDAPAH) is disordered.

Belongs to the UPF0328 family.

The polypeptide is UPF0328 protein ECU04_0100 (Encephalitozoon cuniculi (strain GB-M1) (Microsporidian parasite)).